We begin with the raw amino-acid sequence, 403 residues long: Neuromedin U receptor homolog nmur-2 (403 aa).

Topologically, residues 1 to 27 (MSQCTVEYNVSEITEYVLSTLGERCQS) are extracellular. The helical transmembrane segment at 28 to 48 (AGIVIPTVIIYGTIFLLGLFG) threads the bilayer. Residues 49–68 (NICTCIVIAANKSMHNPTNY) lie on the Cytoplasmic side of the membrane. A helical membrane pass occupies residues 69-89 (YLFSLAVSDIIALILGLPMEF). Topologically, residues 90–109 (YQSLDYSYPYRFSEGICKAR) are extracellular. A helical transmembrane segment spans residues 110 to 130 (AFLIEFTSYASIMIICCFSFE). Residues 131–151 (RWLAICHPLRSKIFSTLWRAN) lie on the Cytoplasmic side of the membrane. Residues 152-172 (VLIILAWTISFVCALPIAFIV) form a helical membrane-spanning segment. The Extracellular segment spans residues 173–216 (QINKLPLPEDAKYQPWTNKVSTDGIFVLHTEFCAMNQSRPDQQK). A helical transmembrane segment spans residues 217 to 237 (MIIIFAFTVFFVIPAIAIVIM). Residues 238–268 (YAHIAVQLESSEIDLKGDKMVKKRRNKSNRT) lie on the Cytoplasmic side of the membrane. The chain crosses the membrane as a helical span at residues 269 to 289 (VLKMLLSVVITFFICWLPFHI). Over 290–304 (QRLLSVYTTWSETTT) the chain is Extracellular. The chain crosses the membrane as a helical span at residues 305 to 325 (ISPPVQFLSMIVFYISGFCYY). Topologically, residues 326–403 (SNSAANPILY…PHRKLEVHNY (78 aa)) are cytoplasmic.

It belongs to the G-protein coupled receptor 1 family.

The protein localises to the membrane. Functionally, putative G protein-coupled receptor for pyrokinin-like neuropeptide derived from the processing of the neuropeptide precursor capa-1. The polypeptide is Neuromedin U receptor homolog nmur-2 (Caenorhabditis elegans).